The following is a 400-amino-acid chain: Homoserine O-acetyltransferase (400 aa).

The segment covering 1 to 11 (MVKVQSIQSQA) has biased composition (polar residues). The interval 1–24 (MVKVQSIQSQAVHAEERAHEADHP) is disordered. The segment covering 13-23 (HAEERAHEADH) has biased composition (basic and acidic residues). The AB hydrolase-1 domain maps to 64–373 (NAILVCHALT…TDRGHDAFLL (310 aa)). The active-site Nucleophile is the Ser-169. Arg-239 is a substrate binding site. Residues Asp-335 and His-368 contribute to the active site. Asp-369 contributes to the substrate binding site.

It belongs to the AB hydrolase superfamily. MetX family. In terms of assembly, homodimer.

The protein resides in the cytoplasm. It carries out the reaction L-homoserine + acetyl-CoA = O-acetyl-L-homoserine + CoA. It functions in the pathway amino-acid biosynthesis; L-methionine biosynthesis via de novo pathway; O-acetyl-L-homoserine from L-homoserine: step 1/1. Its function is as follows. Transfers an acetyl group from acetyl-CoA to L-homoserine, forming acetyl-L-homoserine. This Rhodopseudomonas palustris (strain BisB18) protein is Homoserine O-acetyltransferase.